Consider the following 175-residue polypeptide: Zinc finger A20 and AN1 domain-containing stress-associated protein 7 (175 aa).

An A20-type zinc finger spans residues 13–47 (PTEPKLCDNGCGFFGSPSNMNLCSKCYRSLRAEED). Cysteine 19, cysteine 23, cysteine 35, cysteine 38, cysteine 116, cysteine 119, cysteine 130, cysteine 132, cysteine 137, histidine 140, histidine 146, and cysteine 148 together coordinate Zn(2+). The segment at 110 to 156 (VRPNNRCFSCNKKVGVMGFKCKCGSTFCGSHRYPEKHECSFDFKEVG) adopts an AN1-type zinc-finger fold.

Functionally, may be involved in environmental stress response. This Arabidopsis thaliana (Mouse-ear cress) protein is Zinc finger A20 and AN1 domain-containing stress-associated protein 7 (SAP7).